The sequence spans 96 residues: Putative pterin-4-alpha-carbinolamine dehydratase (96 aa).

It belongs to the pterin-4-alpha-carbinolamine dehydratase family.

It carries out the reaction (4aS,6R)-4a-hydroxy-L-erythro-5,6,7,8-tetrahydrobiopterin = (6R)-L-erythro-6,7-dihydrobiopterin + H2O. The chain is Putative pterin-4-alpha-carbinolamine dehydratase from Prochlorococcus marinus (strain MIT 9303).